Consider the following 141-residue polypeptide: Large ribosomal subunit protein uL11 (141 aa).

It belongs to the universal ribosomal protein uL11 family. Part of the ribosomal stalk of the 50S ribosomal subunit. Interacts with L10 and the large rRNA to form the base of the stalk. L10 forms an elongated spine to which L12 dimers bind in a sequential fashion forming a multimeric L10(L12)X complex. Post-translationally, one or more lysine residues are methylated.

Forms part of the ribosomal stalk which helps the ribosome interact with GTP-bound translation factors. This Clostridium perfringens (strain ATCC 13124 / DSM 756 / JCM 1290 / NCIMB 6125 / NCTC 8237 / Type A) protein is Large ribosomal subunit protein uL11.